The chain runs to 170 residues: Acetolactate synthase small subunit (170 aa).

An ACT domain is found at 9–83; it reads TLSVLVEDKP…NVIKIVEQEE (75 aa). Lys-46 is covalently cross-linked (Isoglutamyl lysine isopeptide (Lys-Gln) (interchain with Q-Cter in protein Pup)).

It belongs to the acetolactate synthase small subunit family. In terms of assembly, dimer of large and small chains.

It catalyses the reaction 2 pyruvate + H(+) = (2S)-2-acetolactate + CO2. Its pathway is amino-acid biosynthesis; L-isoleucine biosynthesis; L-isoleucine from 2-oxobutanoate: step 1/4. The protein operates within amino-acid biosynthesis; L-valine biosynthesis; L-valine from pyruvate: step 1/4. The sequence is that of Acetolactate synthase small subunit (ilvH) from Mycolicibacterium smegmatis (strain ATCC 700084 / mc(2)155) (Mycobacterium smegmatis).